Consider the following 271-residue polypeptide: Ribosomal RNA small subunit methyltransferase J (271 aa).

S-adenosyl-L-methionine-binding positions include 116–117 (RD), 132–133 (ER), 168–169 (SS), and Asp-190.

The protein belongs to the methyltransferase superfamily. RsmJ family.

It is found in the cytoplasm. The enzyme catalyses guanosine(1516) in 16S rRNA + S-adenosyl-L-methionine = N(2)-methylguanosine(1516) in 16S rRNA + S-adenosyl-L-homocysteine + H(+). Specifically methylates the guanosine in position 1516 of 16S rRNA. This Shewanella piezotolerans (strain WP3 / JCM 13877) protein is Ribosomal RNA small subunit methyltransferase J.